Consider the following 484-residue polypeptide: Trigger factor (484 aa).

The region spanning 162-243 (GDFISIDLSA…VKSVKERELP (82 aa)) is the PPIase FKBP-type domain. Residues 427–484 (DGNTIDTSEFFGKPPENDVTDLLDDDADGDAGVDADGDTENSAEPADADSADAAQGAG) are disordered. Residues 444-476 (DVTDLLDDDADGDAGVDADGDTENSAEPADADS) are compositionally biased toward acidic residues.

It belongs to the FKBP-type PPIase family. Tig subfamily.

Its subcellular location is the cytoplasm. It catalyses the reaction [protein]-peptidylproline (omega=180) = [protein]-peptidylproline (omega=0). Involved in protein export. Acts as a chaperone by maintaining the newly synthesized protein in an open conformation. Functions as a peptidyl-prolyl cis-trans isomerase. The sequence is that of Trigger factor from Mycobacterium marinum (strain ATCC BAA-535 / M).